The primary structure comprises 259 residues: Putative deoxyribonuclease TATDN1 homolog (259 aa).

The a divalent metal cation site is built by Glu82, His116, His138, and Asp186.

The protein belongs to the metallo-dependent hydrolases superfamily. TatD-type hydrolase family. Requires a divalent metal cation as cofactor.

It localises to the nucleus. In terms of biological role, putative deoxyribonuclease. This is Putative deoxyribonuclease TATDN1 homolog from Vairimorpha ceranae (strain BRL01) (Microsporidian parasite).